Reading from the N-terminus, the 183-residue chain is Capsid protein (183 aa).

The interval 136 to 183 (NAPILSTLPETTVVRRRGRSPRRRTPSPRRRRSQSPRRRRSQSRESQC) is disordered. Residues 149 to 176 (VRRRGRSPRRRTPSPRRRRSQSPRRRRS) are compositionally biased toward basic residues. A phosphoserine; by host mark is found at serine 155, serine 162, and serine 170. A 1; half-length repeat occupies 155–161 (SPRRRTP). The segment at 155-177 (SPRRRTPSPRRRRSQSPRRRRSQ) is 3 X 8 AA repeats of S-P-R-R-R-[PR]-S-Q. Residues 158–175 (RRTPSPRRRRSQSPRRRR) carry the Bipartite nuclear localization signal motif. 2 consecutive repeat copies span residues 162–169 (SPRRRRSQ) and 170–177 (SPRRRRSQ). Positions 177 to 183 (QSRESQC) are RNA binding.

It belongs to the orthohepadnavirus core antigen family. As to quaternary structure, homodimerizes, then multimerizes. Interacts with cytosol exposed regions of viral L glycoprotein present in the reticulum-to-Golgi compartment. Interacts with human FLNB. Phosphorylated form interacts with host importin alpha; this interaction depends on the exposure of the NLS, which itself depends upon genome maturation and/or phosphorylation of the capsid protein. Interacts with host NUP153. In terms of processing, phosphorylated by host SRPK1, SRPK2, and maybe protein kinase C or GAPDH. Phosphorylation is critical for pregenomic RNA packaging. Protein kinase C phosphorylation is stimulated by HBx protein and may play a role in transport of the viral genome to the nucleus at the late step during the viral replication cycle.

The protein resides in the virion. The protein localises to the host cytoplasm. In terms of biological role, self assembles to form an icosahedral capsid. Most capsids appear to be large particles with an icosahedral symmetry of T=4 and consist of 240 copies of capsid protein, though a fraction forms smaller T=3 particles consisting of 180 capsid proteins. Entering capsids are transported along microtubules to the nucleus. Phosphorylation of the capsid is thought to induce exposure of nuclear localization signal in the C-terminal portion of the capsid protein that allows binding to the nuclear pore complex via the importin (karyopherin-) alpha and beta. Capsids are imported in intact form through the nuclear pore into the nuclear basket, where it probably binds NUP153. Only capsids that contain the mature viral genome can release the viral DNA and capsid protein into the nucleoplasm. Immature capsids get stuck in the basket. Capsids encapsulate the pre-genomic RNA and the P protein. Pre-genomic RNA is reverse-transcribed into DNA while the capsid is still in the cytoplasm. The capsid can then either be directed to the nucleus, providing more genomes for transcription, or bud through the endoplasmic reticulum to provide new virions. This Homo sapiens (Human) protein is Capsid protein.